Reading from the N-terminus, the 328-residue chain is DNA polymerase IV (328 aa).

The UmuC domain maps to 6-187; the sequence is IIHIDMDYFF…LDIGDFPGVG (182 aa). Positions 10 and 105 each coordinate Mg(2+). Residue Glu-106 is part of the active site.

The protein belongs to the DNA polymerase type-Y family. Monomer. Mg(2+) serves as cofactor.

Its subcellular location is the cytoplasm. It carries out the reaction DNA(n) + a 2'-deoxyribonucleoside 5'-triphosphate = DNA(n+1) + diphosphate. In terms of biological role, poorly processive, error-prone DNA polymerase involved in untargeted mutagenesis. Copies undamaged DNA at stalled replication forks, which arise in vivo from mismatched or misaligned primer ends. These misaligned primers can be extended by PolIV. Exhibits no 3'-5' exonuclease (proofreading) activity. May be involved in translesional synthesis, in conjunction with the beta clamp from PolIII. The sequence is that of DNA polymerase IV from Staphylococcus aureus (strain bovine RF122 / ET3-1).